A 304-amino-acid chain; its full sequence is Small ribosomal subunit biogenesis GTPase RsgA (304 aa).

The CP-type G domain occupies 78–237 (HSFLTRPPVA…VADTPGFNRP (160 aa)). Residues 127-130 (TKTD) and 179-187 (GPSGVGKSS) each bind GTP. Zn(2+) is bound by residues Cys262, Cys267, His269, and Cys275.

The protein belongs to the TRAFAC class YlqF/YawG GTPase family. RsgA subfamily. As to quaternary structure, monomer. Associates with 30S ribosomal subunit, binds 16S rRNA. The cofactor is Zn(2+).

It localises to the cytoplasm. Its function is as follows. One of several proteins that assist in the late maturation steps of the functional core of the 30S ribosomal subunit. Helps release RbfA from mature subunits. May play a role in the assembly of ribosomal proteins into the subunit. Circularly permuted GTPase that catalyzes slow GTP hydrolysis, GTPase activity is stimulated by the 30S ribosomal subunit. This chain is Small ribosomal subunit biogenesis GTPase RsgA, found in Synechococcus sp. (strain CC9605).